We begin with the raw amino-acid sequence, 81 residues long: NADH-ubiquinone oxidoreductase chain 6 (81 aa).

The next 3 helical transmembrane spans lie at 1–21, 27–47, and 48–68; these read MTYFVFFLGICFVVGVLGVAS, YGVVGLVLASVAGCGWLLSLG, and VSFVALVLFMVYFGGMLVVFV.

This sequence belongs to the complex I subunit 6 family.

The protein resides in the mitochondrion membrane. The enzyme catalyses a ubiquinone + NADH + 5 H(+)(in) = a ubiquinol + NAD(+) + 4 H(+)(out). Its function is as follows. Core subunit of the mitochondrial membrane respiratory chain NADH dehydrogenase (Complex I) that is believed to belong to the minimal assembly required for catalysis. Complex I functions in the transfer of electrons from NADH to the respiratory chain. The immediate electron acceptor for the enzyme is believed to be ubiquinone. The polypeptide is NADH-ubiquinone oxidoreductase chain 6 (MT-ND6) (Anas platyrhynchos (Mallard)).